The following is a 394-amino-acid chain: Elongation factor Tu (394 aa).

Residues 10 to 204 enclose the tr-type G domain; the sequence is KPHVNVGTIG…YLDSYIPEPE (195 aa). A G1 region spans residues 19–26; sequence GHVDHGKT. 19–26 lines the GTP pocket; that stretch reads GHVDHGKT. Mg(2+) is bound at residue Thr26. Residues 60-64 form a G2 region; the sequence is GITIN. Positions 81-84 are G3; sequence DCPG. Residues 81–85 and 136–139 each bind GTP; these read DCPGH and NKCD. The G4 stretch occupies residues 136 to 139; sequence NKCD. Residues 174–176 are G5; the sequence is SAL.

The protein belongs to the TRAFAC class translation factor GTPase superfamily. Classic translation factor GTPase family. EF-Tu/EF-1A subfamily. Monomer.

It is found in the cytoplasm. The catalysed reaction is GTP + H2O = GDP + phosphate + H(+). Functionally, GTP hydrolase that promotes the GTP-dependent binding of aminoacyl-tRNA to the A-site of ribosomes during protein biosynthesis. This is Elongation factor Tu from Enterobacter sp. (strain 638).